We begin with the raw amino-acid sequence, 301 residues long: POU domain, class 6, transcription factor 1 (301 aa).

2 tandem repeats follow at residues 11–17 (NAQGQVI) and 50–56 (NAQGQVI). Positions 11-56 (NAQGQVIGALPWVVNSASVATPAPAQSLQVQAVTPQLLLNAQGQVI) are 2 X 7 AA repeats of N-A-Q-G-Q-V-I. Residues 66–88 (QPVAVRKPSTPESPAKSEVQPIQ) form a disordered region. Residues 139-213 (EDGINLEEIR…VLEKWLNEAE (75 aa)) form the POU-specific domain. A DNA-binding region (homeobox) is located at residues 234-293 (KRKRRTSFTPQAIEALNAYFEKNPLPTGQEITEIAKELNYDREVVRVWFCNRRQTLKNTS).

The protein belongs to the POU transcription factor family. Class-6 subfamily. In terms of tissue distribution, in the embryo, widely expressed, with highest levels in the developing brain and spinal cord. In the adult, mostly found in the brain, where it is diffusely expressed with the exception of an enrichment in layer IV of the neocortex. Also found in kidney, lung, heart, adrenal, skin, and placenta. Low levels in spleen, muscle, liver, anterior pituitary, testis and ovary.

It localises to the nucleus. Functionally, transcription factor that binds preferentially to a variant of the octamer motif (5'-ATGATAAT-3'). This is POU domain, class 6, transcription factor 1 (Pou6f1) from Rattus norvegicus (Rat).